Consider the following 401-residue polypeptide: Deoxyhypusine synthase-like protein (401 aa).

The protein belongs to the deoxyhypusine synthase family.

In Thermosynechococcus vestitus (strain NIES-2133 / IAM M-273 / BP-1), this protein is Deoxyhypusine synthase-like protein.